The primary structure comprises 361 residues: 5-formaminoimidazole-4-carboxamide-1-(beta)-D-ribofuranosyl 5'-monophosphate synthetase (361 aa).

Residues H27 and S94 each contribute to the 5-amino-1-(5-phospho-beta-D-ribosyl)imidazole-4-carboxamide site. Positions 116–348 (RAILRWEAER…MGQRIAKEIK (233 aa)) constitute an ATP-grasp domain. ATP is bound by residues 146–208 (PDDI…ANYC) and E230. N258 is a 5-amino-1-(5-phospho-beta-D-ribosyl)imidazole-4-carboxamide binding site. Positions 297 and 310 each coordinate Mg(2+).

Belongs to the phosphohexose mutase family. The cofactor is Mg(2+). Mn(2+) is required as a cofactor.

It carries out the reaction 5-amino-1-(5-phospho-beta-D-ribosyl)imidazole-4-carboxamide + formate + ATP = 5-formamido-1-(5-phospho-D-ribosyl)imidazole-4-carboxamide + ADP + phosphate. Its pathway is purine metabolism; IMP biosynthesis via de novo pathway; 5-formamido-1-(5-phospho-D-ribosyl)imidazole-4-carboxamide from 5-amino-1-(5-phospho-D-ribosyl)imidazole-4-carboxamide (formate route): step 1/1. Catalyzes the ATP- and formate-dependent formylation of 5-aminoimidazole-4-carboxamide-1-beta-d-ribofuranosyl 5'-monophosphate (AICAR) to 5-formaminoimidazole-4-carboxamide-1-beta-d-ribofuranosyl 5'-monophosphate (FAICAR) in the absence of folates. The chain is 5-formaminoimidazole-4-carboxamide-1-(beta)-D-ribofuranosyl 5'-monophosphate synthetase from Methanococcus maripaludis (strain C5 / ATCC BAA-1333).